The primary structure comprises 367 residues: bZIP transcription factor 18 (367 aa).

Residues 1 to 57 form a disordered region; the sequence is MEDPSNPQPNQSNLSQCPPLATAPTPAPVRGPYHRRAHSEVQFRLPEDLDLSEPFGG. Positions 38-47 are enriched in basic and acidic residues; that stretch reads HSEVQFRLPE. Position 70 is a phosphoserine (Ser70). Residues 79–124 are disordered; that stretch reads SGSGSASDSAGPSAPRSDNPFSAENGGAEAGNSRPRHRHSLSVDGS. The span at 82–96 shows a compositional bias: low complexity; sequence GSASDSAGPSAPRSD. Residues 148-211 enclose the bZIP domain; that stretch reads DPKRAKRIIA…TGLSSENTEL (64 aa). Residues 150 to 171 are basic motif; it reads KRAKRIIANRQSAARSKERKAR. The stretch at 166–245 forms a coiled coil; sequence KERKARYILE…VERLKFATGE (80 aa). Residues 176 to 190 are leucine-zipper; sequence LERKVQTLQTEATTL. Composition is skewed to polar residues over residues 294 to 309, 317 to 328, and 354 to 367; these read QPNN…NPPT, ATSNAPAQSHSY, and FGRS…SSTM. Disordered regions lie at residues 294–330 and 343–367; these read QPNN…SYSE and LDIS…SSTM.

As to quaternary structure, interacts with NEAP1. Forms homodimer and heterodimer with bZIP34 and bZIP61. As to expression, ubiquitous. Strongly expressed in mature pollen.

It localises to the nucleus. The protein resides in the nucleoplasm. The protein localises to the cytoplasm. It is found in the perinuclear region. In terms of biological role, transcription factor that may participate with bZIP34 in the gametophytic control of pollen development. This chain is bZIP transcription factor 18, found in Arabidopsis thaliana (Mouse-ear cress).